Here is a 520-residue protein sequence, read N- to C-terminus: Peptide chain release factor 3 (520 aa).

Residues Glu-8–Thr-277 form the tr-type G domain. GTP is bound by residues Ser-17 to Thr-24, Asp-85 to His-89, and Asn-139 to Asp-142.

It belongs to the TRAFAC class translation factor GTPase superfamily. Classic translation factor GTPase family. PrfC subfamily.

It localises to the cytoplasm. Functionally, increases the formation of ribosomal termination complexes and stimulates activities of RF-1 and RF-2. It binds guanine nucleotides and has strong preference for UGA stop codons. It may interact directly with the ribosome. The stimulation of RF-1 and RF-2 is significantly reduced by GTP and GDP, but not by GMP. The sequence is that of Peptide chain release factor 3 from Staphylococcus saprophyticus subsp. saprophyticus (strain ATCC 15305 / DSM 20229 / NCIMB 8711 / NCTC 7292 / S-41).